The following is a 243-amino-acid chain: MGRGPSIENRKNASDAKRGKIFTKIIREIGVAARGGGGDPNNNPRLRVAMDKGLTANMSKDVIERAIKKATGELEGVEYEEIRYEGYAPGGVAVIVDCLTDNRVRTVADVRHAFSKCGGNMGTEGSVSFMFKRVGVLHFAAGADEDAISEAAIEAGADDIVVYPEDGAIDVLTAADSYHAVKEAMAAAGRTPDHAELTFRADNDIKVEGDTVLQVKKLLDMLEDLDDVQDVYSNADLGADAYA.

The protein belongs to the TACO1 family.

It localises to the cytoplasm. The chain is Probable transcriptional regulatory protein Smal_3128 from Stenotrophomonas maltophilia (strain R551-3).